A 361-amino-acid chain; its full sequence is Probable sugar phosphate/phosphate translocator At1g12500 (361 aa).

N-acetylvaline is present on Val-2. A run of 9 helical transmembrane segments spans residues 56-76 (TILT…VLLL), 90-110 (IFLT…VINI), 125-145 (FLKI…GNTS), 153-173 (FNQA…FLIT), 192-212 (IVLA…ICVA), 240-260 (LLLY…LYIE), 276-296 (LIIF…LTNF), 306-326 (TLQV…VLIF), and 329-349 (PVTV…VLYS). The EamA domain maps to 89-196 (PIFLTMTHML…PVVSGIVLAS (108 aa)).

Belongs to the TPT transporter family. TPT (TC 2.A.7.9) subfamily.

The protein localises to the membrane. The protein is Probable sugar phosphate/phosphate translocator At1g12500 of Arabidopsis thaliana (Mouse-ear cress).